The chain runs to 491 residues: UDP-N-acetylmuramate--L-alanine ligase (491 aa).

126 to 132 provides a ligand contact to ATP; it reads GTHGKTT.

It belongs to the MurCDEF family.

It localises to the cytoplasm. The enzyme catalyses UDP-N-acetyl-alpha-D-muramate + L-alanine + ATP = UDP-N-acetyl-alpha-D-muramoyl-L-alanine + ADP + phosphate + H(+). Its pathway is cell wall biogenesis; peptidoglycan biosynthesis. Its function is as follows. Cell wall formation. This Yersinia pestis (strain Pestoides F) protein is UDP-N-acetylmuramate--L-alanine ligase.